The sequence spans 274 residues: Basic leucine zipper transcriptional factor ATF-like 2 (274 aa).

Disordered regions lie at residues 1–47 (MHLC…ALHQ), 128–151 (GSCY…LLQC), and 187–229 (GSSS…PSSA). Residues 17–80 (EQQRQLKKQK…AWWSRTLHVH (64 aa)) form the bZIP domain. The interval 20–41 (RQLKKQKNRAAAQRSRQKHTDK) is basic motif. Residues 37–47 (KHTDKADALHQ) are compositionally biased toward basic and acidic residues. The interval 45-66 (LHQQHESLEKDNLALRKEIQSL) is leucine-zipper. Over residues 187–196 (GSSSKLSALQ) the composition is skewed to low complexity.

This sequence belongs to the bZIP family. As to quaternary structure, heterodimer; heterodimerizes with JUN family proteins.

The protein localises to the nucleus. In terms of biological role, AP-1 family transcription factor that controls the differentiation of lineage-specific cells in the immune system. Following infection, participates in the differentiation of CD8(+) thymic conventional dendritic cells in the immune system. Acts via the formation of a heterodimer with JUN family proteins that recognizes and binds DNA sequence 5'-TGA[CG]TCA-3' and regulates expression of target genes. Selectively suppresses CCN1 transcription and hence blocks the downstream cell proliferation signals produced by CCN1 and inhibits CCN1-induced anchorage-independent growth and invasion in several cancer types, such as breast cancer, malignant glioma and metastatic melanoma. Possibly acts by interfering with AP-1 binding to CCN1 promoter. This is Basic leucine zipper transcriptional factor ATF-like 2 (BATF2) from Homo sapiens (Human).